The primary structure comprises 207 residues: ATP-dependent dethiobiotin synthetase BioD (207 aa).

Position 13–18 (13–18 (EVGKTV)) interacts with ATP. A Mg(2+)-binding site is contributed by T17. The active site involves K33. ATP contacts are provided by residues D44 and 100–103 (EGAG). Positions 44 and 100 each coordinate Mg(2+).

Belongs to the dethiobiotin synthetase family. As to quaternary structure, homodimer. The cofactor is Mg(2+).

It localises to the cytoplasm. It catalyses the reaction (7R,8S)-7,8-diammoniononanoate + CO2 + ATP = (4R,5S)-dethiobiotin + ADP + phosphate + 3 H(+). Its pathway is cofactor biosynthesis; biotin biosynthesis; biotin from 7,8-diaminononanoate: step 1/2. Catalyzes a mechanistically unusual reaction, the ATP-dependent insertion of CO2 between the N7 and N8 nitrogen atoms of 7,8-diaminopelargonic acid (DAPA, also called 7,8-diammoniononanoate) to form a ureido ring. This is ATP-dependent dethiobiotin synthetase BioD from Christiangramia forsetii (strain DSM 17595 / CGMCC 1.15422 / KT0803) (Gramella forsetii).